Reading from the N-terminus, the 197-residue chain is Ribonuclease HII (197 aa).

The RNase H type-2 domain occupies 14-197 (EKIVGIDEAG…RSFNLGVNDD (184 aa)). The a divalent metal cation site is built by Asp20, Glu21, and Asp112.

It belongs to the RNase HII family. Requires Mn(2+) as cofactor. It depends on Mg(2+) as a cofactor.

It is found in the cytoplasm. The catalysed reaction is Endonucleolytic cleavage to 5'-phosphomonoester.. Its function is as follows. Endonuclease that specifically degrades the RNA of RNA-DNA hybrids. The polypeptide is Ribonuclease HII (Sulfurihydrogenibium sp. (strain YO3AOP1)).